The following is a 462-amino-acid chain: Argininosuccinate lyase (462 aa).

This sequence belongs to the lyase 1 family. Argininosuccinate lyase subfamily.

The protein localises to the cytoplasm. The enzyme catalyses 2-(N(omega)-L-arginino)succinate = fumarate + L-arginine. The protein operates within amino-acid biosynthesis; L-arginine biosynthesis; L-arginine from L-ornithine and carbamoyl phosphate: step 3/3. This chain is Argininosuccinate lyase, found in Bacillus cereus (strain ZK / E33L).